We begin with the raw amino-acid sequence, 123 residues long: Major pollen allergen Ole e 10 (123 aa).

Residues 1–21 (MRGTAGVPDQPVPTPTPSVPT) form the signal peptide. Residues 1–37 (MRGTAGVPDQPVPTPTPSVPTSSSPVPKPPTQGNKKW) form a disordered region. A disulfide bridge links cysteine 38 with cysteine 101.

The N-terminus is blocked. Post-translationally, phosphorylated at Ser-24 when expressed as a recombinant protein in a heterologous system. In terms of processing, not glycosylated. Contains two additional disulfide bonds. As to expression, expressed in mature and germinating pollen.

It is found in the cytoplasmic vesicle. Functionally, carbohydrate-binding protein binding preferentially 1,3-beta-glucans. May be involved in pollen tube wall re-formation during germination. In Olea europaea (Common olive), this protein is Major pollen allergen Ole e 10.